A 191-amino-acid chain; its full sequence is Pyridoxal 5'-phosphate synthase subunit PdxT (191 aa).

46 to 48 contributes to the L-glutamine binding site; that stretch reads GES. Cys78 serves as the catalytic Nucleophile. Residues Arg105 and 133–134 each bind L-glutamine; that span reads IR. Catalysis depends on charge relay system residues His169 and Glu171.

This sequence belongs to the glutaminase PdxT/SNO family. In the presence of PdxS, forms a dodecamer of heterodimers. Only shows activity in the heterodimer.

It carries out the reaction aldehydo-D-ribose 5-phosphate + D-glyceraldehyde 3-phosphate + L-glutamine = pyridoxal 5'-phosphate + L-glutamate + phosphate + 3 H2O + H(+). The enzyme catalyses L-glutamine + H2O = L-glutamate + NH4(+). The protein operates within cofactor biosynthesis; pyridoxal 5'-phosphate biosynthesis. Functionally, catalyzes the hydrolysis of glutamine to glutamate and ammonia as part of the biosynthesis of pyridoxal 5'-phosphate. The resulting ammonia molecule is channeled to the active site of PdxS. This chain is Pyridoxal 5'-phosphate synthase subunit PdxT, found in Fervidobacterium nodosum (strain ATCC 35602 / DSM 5306 / Rt17-B1).